Here is a 486-residue protein sequence, read N- to C-terminus: UDP-N-acetylmuramate--L-alanine ligase (486 aa).

Position 123–129 (123–129) interacts with ATP; that stretch reads GTHGKTT.

This sequence belongs to the MurCDEF family.

The protein localises to the cytoplasm. It catalyses the reaction UDP-N-acetyl-alpha-D-muramate + L-alanine + ATP = UDP-N-acetyl-alpha-D-muramoyl-L-alanine + ADP + phosphate + H(+). Its pathway is cell wall biogenesis; peptidoglycan biosynthesis. In terms of biological role, cell wall formation. In Pseudomonas fluorescens (strain Pf0-1), this protein is UDP-N-acetylmuramate--L-alanine ligase.